The following is a 278-amino-acid chain: Phage-like element PBSX protein XkdB (278 aa).

The H-T-H motif DNA-binding region spans 58 to 80 (LKAREMAAVFGVSEKTVRRWLEL). Disordered stretches follow at residues 117 to 136 (SLKE…RTDI) and 239 to 278 (QHER…RKQV). A compositionally biased stretch (basic and acidic residues) spans 248–263 (KTNNRTDFGRAEKRET).

The protein to B.subtilis YqaL.

This is Phage-like element PBSX protein XkdB (xkdB) from Bacillus subtilis (strain 168).